Reading from the N-terminus, the 469-residue chain is Putative F-box/LRR-repeat protein At5g02930 (469 aa).

Residues 27–77 (VDSISDLPDAVLQHIFSYIPTELAIRTSVLSKRWRHVWSETPHLSFEWLKV) enclose the F-box domain. 6 LRR repeats span residues 30-58 (ISDL…VLSK), 178-203 (DCTM…SLKF), 204-214 (CMSLKYLNLSK), 223-250 (IERI…RLRD), 296-321 (TMLK…SLSK), and 341-366 (IIRS…TVYT).

The protein is Putative F-box/LRR-repeat protein At5g02930 of Arabidopsis thaliana (Mouse-ear cress).